A 582-amino-acid polypeptide reads, in one-letter code: Vesicular glutamate transporter 2 (582 aa).

The Cytoplasmic segment spans residues 1 to 71 (MESVKQRILT…CTCFGLPRRY (71 aa)). Residues 72–92 (IIAIMSGLGFCISFGIRCNLG) traverse the membrane as a helical segment. Topologically, residues 93 to 125 (VAIVDMVNNSTIHRGGKVIKEKAKFNWDPETVG) are vesicular. Asn100 and Asn101 each carry an N-linked (GlcNAc...) asparagine glycan. A helical membrane pass occupies residues 126–146 (MIHGSFFWGYIITQIPGGYIA). Residues 147-148 (SR) lie on the Cytoplasmic side of the membrane. The chain crosses the membrane as a helical span at residues 149–169 (LAANRVFGAAILLTSTLNMLI). The Vesicular segment spans residues 170-177 (PSAARVHY). Residues 178-198 (GCVIFVRILQGLVEGVTYPAC) form a helical membrane-spanning segment. Residues 199 to 216 (HGIWSKWAPPLERSRLAT) lie on the Cytoplasmic side of the membrane. Residues 217-237 (TSFCGSYAGAVIAMPLAGILV) traverse the membrane as a helical segment. Residues 238–244 (QYTGWSS) lie on the Vesicular side of the membrane. The helical transmembrane segment at 245 to 265 (VFYVYGSFGMIWYMFWLLVSY) threads the bilayer. Residues 266 to 310 (ESPAKHPTITDEERRYIEESIGESANLLGAMEKFKTPWRKFFTSM) lie on the Cytoplasmic side of the membrane. Residues 311-331 (PVYAIIVANFCRSWTFYLLLI) form a helical membrane-spanning segment. Topologically, residues 332 to 349 (SQPAYFEEVFGFEISKVG) are vesicular. Residues 350–370 (MLSAVPHLVMTIIVPIGGQIA) form a helical membrane-spanning segment. Residues 371 to 386 (DFLRSKQILSTTTVRK) lie on the Cytoplasmic side of the membrane. A helical transmembrane segment spans residues 387-407 (IMNCGGFGMEATLLLVVGYSH). Topologically, residues 408–409 (TR) are vesicular. A helical membrane pass occupies residues 410–430 (GVAISFLVLAVGFSGFAISGF). Residues 431–443 (NVNHLDIAPRYAS) are Cytoplasmic-facing. A helical transmembrane segment spans residues 444 to 464 (ILMGISNGVGTLSGMVCPIIV). The Vesicular portion of the chain corresponds to 465–477 (GAMTKNKSREEWQ). Asn470 carries N-linked (GlcNAc...) asparagine glycosylation. A helical membrane pass occupies residues 478 to 498 (YVFLIAALVHYGGVIFYAIFA). The Cytoplasmic segment spans residues 499–582 (SGEKQPWADP…YNYKDRDDYS (84 aa)).

Belongs to the major facilitator superfamily. Sodium/anion cotransporter family. VGLUT subfamily.

Its subcellular location is the cytoplasmic vesicle. It localises to the secretory vesicle. It is found in the synaptic vesicle membrane. The protein resides in the synapse. The protein localises to the synaptosome. Its subcellular location is the cell membrane. The enzyme catalyses L-glutamate(out) = L-glutamate(in). It carries out the reaction 3 Na(+)(out) + phosphate(out) = 3 Na(+)(in) + phosphate(in). It catalyses the reaction phosphate(in) = phosphate(out). The catalysed reaction is K(+)(in) + H(+)(out) = K(+)(out) + H(+)(in). The enzyme catalyses chloride(in) = chloride(out). Chloride channel activity is allosterically activated by lumenal H(+) and Cl(-) leading to synaptic vesicles acidification. The L-glutamate transport activity is allosterically activated by lumenal H(+) and Cl(-). The allosteric requirement for H(+) efficiently prevents non-vesicular efflux across the plasma membrane. The L-glutamate uniporter activity exhibits a biphasic dependence on chloride concentration. Its function is as follows. Multifunctional transporter that transports L-glutamate as well as multiple ions such as chloride, proton, potassium, sodium and phosphate. At the synaptic vesicle membrane, mainly functions as a uniporter which transports preferentially L-glutamate but also, phosphate from the cytoplasm into synaptic vesicles at presynaptic nerve terminals of excitatory neural cells. The L-glutamate or phosphate uniporter activity is electrogenic and is driven by the proton electrochemical gradient, mainly by the electrical gradient established by the vacuolar H(+)-ATPase across the synaptic vesicle membrane. In addition, functions as a chloride channel that allows a chloride permeation through the synaptic vesicle membrane therefore affects the proton electrochemical gradient and promotes synaptic vesicles acidification. Moreover, functions as a vesicular K(+)/H(+) antiport allowing to maintain the electrical gradient and to decrease chemical gradient and therefore sustain vesicular L-glutamate uptake. The vesicular H(+)/H(+) antiport activity is electroneutral. At the plasma membrane, following exocytosis, functions as a symporter of Na(+) and phosphate from the extracellular space to the cytoplasm allowing synaptic phosphate homeostasis regulation. The symporter activity is driven by an inside negative membrane potential and is electrogenic. Also involved in the regulation of retinal hyaloid vessel regression during postnatal development. May also play a role in the endocrine L-glutamatergic system of other tissues such as pineal gland and pancreas. This chain is Vesicular glutamate transporter 2, found in Bos taurus (Bovine).